Here is a 192-residue protein sequence, read N- to C-terminus: uncharacterized protein (192 aa).

The Nudix hydrolase domain maps to 29 to 160; sequence HRQAAVLIPI…PLDIYRRGDS (132 aa). The Nudix box signature appears at 67 to 89; that stretch reads GAVDDTDASVIAAALREAEEEVA. Positions 83 and 87 each coordinate Mg(2+).

The protein belongs to the Nudix hydrolase family. PCD1 subfamily. Requires Mn(2+) as cofactor. The cofactor is Mg(2+).

Probably mediates the hydrolysis of some nucleoside diphosphate derivatives. This is an uncharacterized protein from Escherichia coli O139:H28 (strain E24377A / ETEC).